The following is a 732-amino-acid chain: Cyclopenase asqI (732 aa).

3 residues coordinate Zn(2+): histidine 168, histidine 172, and histidine 200.

The protein belongs to the tyrosinase family. Zn(2+) is required as a cofactor.

The catalysed reaction is (-)-cyclopenine = viridicatin + methyl isocyanate + H(+). It catalyses the reaction (-)-4'-methoxycyclopenine = 4'-methoxyviridicatin + methyl isocyanate + H(+). The protein operates within secondary metabolite biosynthesis. It functions in the pathway alkaloid biosynthesis. It participates in mycotoxin biosynthesis. Cyclopenase; part of the gene cluster that mediates the biosynthesis of the aspoquinolone mycotoxins. Within the pathway, the cyclopenase asqI catalyzes the conversion of 4'-methoxycyclopenin into 4'-methoxyviridicatin. Cyclopenin can also be converted into viridicatin by asqI. The first step of the pathway is catalyzed by the nonribosomal peptide synthetase asqK that condenses anthranilic acid and O-methyl-L-tyrosine to produce 4'-methoxycyclopeptin. 4'-methoxycyclopeptin is then converted to 4'-methoxydehydrocyclopeptin by the ketoglutarate-dependent dioxygenase asqJ. AsqJ also converts its first product 4'-methoxydehydrocyclopeptin to 4'-methoxycyclopenin. The following conversion of 4'-methoxycyclopenin into 4'-methoxyviridicatin is catalyzed by the cyclopenase asqI. 4'-methoxyviridicatin is the precursor of quinolone natural products, and is further converted to quinolinone B. The prenyltransferase asqH1 then catalyzes the canonical Friedel-Crafts alkylation of quinolinone B with dimethylallyl cation to yield dimethylallyl quinolone, which is subjected to FAD-dependent dehydrogenation by the FAD-linked oxidoreductase asqF to yield conjugated aryl diene. The delta(3') double bond then serves as the site of the second alkylation with DMAPP catalyzed by the prenyltransferase asqH2 to yield a carbenium ion intermediate, which can be attacked by H(2)O to yield a styrenyl quinolone containing a C3'-hydroxyprenyl chain. The FAD-dependent monooxygenase asqG performs epoxidation of the terminal C7'-C8' olefin. Finally, after dehydratation of the epoxide at C3 by asqC, the quinolone epoxide rearrangement protein asqO catalyzes an enzymatic 3-exo-tet cyclization to yield the cyclopropyl-THF ring system in aspoquinolone. This Emericella nidulans (strain FGSC A4 / ATCC 38163 / CBS 112.46 / NRRL 194 / M139) (Aspergillus nidulans) protein is Cyclopenase asqI.